Reading from the N-terminus, the 458-residue chain is Phosphoglucosamine mutase (458 aa).

The Phosphoserine intermediate role is filled by S106. Residues S106, D247, D249, and D251 each contribute to the Mg(2+) site. Phosphoserine is present on S106.

Belongs to the phosphohexose mutase family. Requires Mg(2+) as cofactor. In terms of processing, activated by phosphorylation.

The catalysed reaction is alpha-D-glucosamine 1-phosphate = D-glucosamine 6-phosphate. In terms of biological role, catalyzes the conversion of glucosamine-6-phosphate to glucosamine-1-phosphate. The chain is Phosphoglucosamine mutase from Chlamydia abortus (strain DSM 27085 / S26/3) (Chlamydophila abortus).